The chain runs to 467 residues: Replication factor C large subunit (467 aa).

47-54 (GPPGVGKT) provides a ligand contact to ATP.

This sequence belongs to the activator 1 small subunits family. RfcL subfamily. As to quaternary structure, heteromultimer composed of small subunits (RfcS) and large subunits (RfcL).

Its function is as follows. Part of the RFC clamp loader complex which loads the PCNA sliding clamp onto DNA. This chain is Replication factor C large subunit, found in Methanothrix thermoacetophila (strain DSM 6194 / JCM 14653 / NBRC 101360 / PT) (Methanosaeta thermophila).